The following is a 380-amino-acid chain: MTDHPIKYRLIKQEKHTGARLGEIITPHGTFPTPMFMPVGTQATVKTQSPEELKEMGSGIILSNTYHLWLRPGDELIAKAGGLHKFMNWDQAILTDSGGFQVYSLADSRNITEEGVTFKNHLNGAKMFLSPEKAISIQNNLGSDIMMSFDECPQFYQPYDYVKKSIERTSRWAERGLNAHRRPHDQGLFGIVQGAGFEDLRRQSARDLVSMDFPGYSIGGLAVGETHDEMNAVLDFTVPMLPNDKPRYLMGVGAPDSLIDAVIRGVDMFDCVLPTRIARNGTCMTSQGRLVVKNAKFAEDFTPLDPNCDCYTCKNYTRAYIRHLLKADETFGIRLTSYHNLYFLVNLMKDVRQAIMDDNLLEFRQDFMERYGYGMNNRNF.

The Proton acceptor role is filled by D96. Substrate-binding positions include 96–100 (DSGGF), D150, Q193, and G220. Residues 251–257 (GVGAPDS) are RNA binding. D270 (nucleophile) is an active-site residue. The RNA binding; important for wobble base 34 recognition stretch occupies residues 275-279 (TRIAR). Positions 308, 310, 313, and 339 each coordinate Zn(2+).

Belongs to the queuine tRNA-ribosyltransferase family. In terms of assembly, homodimer. Within each dimer, one monomer is responsible for RNA recognition and catalysis, while the other monomer binds to the replacement base PreQ1. The cofactor is Zn(2+).

It catalyses the reaction 7-aminomethyl-7-carbaguanine + guanosine(34) in tRNA = 7-aminomethyl-7-carbaguanosine(34) in tRNA + guanine. Its pathway is tRNA modification; tRNA-queuosine biosynthesis. In terms of biological role, catalyzes the base-exchange of a guanine (G) residue with the queuine precursor 7-aminomethyl-7-deazaguanine (PreQ1) at position 34 (anticodon wobble position) in tRNAs with GU(N) anticodons (tRNA-Asp, -Asn, -His and -Tyr). Catalysis occurs through a double-displacement mechanism. The nucleophile active site attacks the C1' of nucleotide 34 to detach the guanine base from the RNA, forming a covalent enzyme-RNA intermediate. The proton acceptor active site deprotonates the incoming PreQ1, allowing a nucleophilic attack on the C1' of the ribose to form the product. After dissociation, two additional enzymatic reactions on the tRNA convert PreQ1 to queuine (Q), resulting in the hypermodified nucleoside queuosine (7-(((4,5-cis-dihydroxy-2-cyclopenten-1-yl)amino)methyl)-7-deazaguanosine). This Streptococcus agalactiae serotype Ia (strain ATCC 27591 / A909 / CDC SS700) protein is Queuine tRNA-ribosyltransferase.